A 348-amino-acid chain; its full sequence is RNA 3'-terminal phosphate cyclase (348 aa).

Residues Gln107 and 290 to 294 (HLADQ) each bind ATP. His316 (tele-AMP-histidine intermediate) is an active-site residue.

Belongs to the RNA 3'-terminal cyclase family. Type 1 subfamily.

The protein resides in the cytoplasm. The catalysed reaction is a 3'-end 3'-phospho-ribonucleotide-RNA + ATP = a 3'-end 2',3'-cyclophospho-ribonucleotide-RNA + AMP + diphosphate. Its function is as follows. Catalyzes the conversion of 3'-phosphate to a 2',3'-cyclic phosphodiester at the end of RNA. The mechanism of action of the enzyme occurs in 3 steps: (A) adenylation of the enzyme by ATP; (B) transfer of adenylate to an RNA-N3'P to produce RNA-N3'PP5'A; (C) and attack of the adjacent 2'-hydroxyl on the 3'-phosphorus in the diester linkage to produce the cyclic end product. The biological role of this enzyme is unknown but it is likely to function in some aspects of cellular RNA processing. In Trichormus variabilis (strain ATCC 29413 / PCC 7937) (Anabaena variabilis), this protein is RNA 3'-terminal phosphate cyclase.